We begin with the raw amino-acid sequence, 44 residues long: Protein PsbN (44 aa).

A helical transmembrane segment spans residues 7–29; the sequence is VATVFVSCLVLSITGYSLYIGFG.

This sequence belongs to the PsbN family.

The protein resides in the plastid. It is found in the chloroplast thylakoid membrane. May play a role in photosystem I and II biogenesis. In Nephroselmis olivacea (Green alga), this protein is Protein PsbN.